The chain runs to 212 residues: Small ribosomal subunit protein uS3 (212 aa).

The 70-residue stretch at 39-108 (IKNYIKERYK…EITISVVEVR (70 aa)) folds into the KH type-2 domain.

Belongs to the universal ribosomal protein uS3 family. In terms of assembly, part of the 30S ribosomal subunit. Forms a tight complex with proteins S10 and S14.

Binds the lower part of the 30S subunit head. Binds mRNA in the 70S ribosome, positioning it for translation. The protein is Small ribosomal subunit protein uS3 of Aquifex aeolicus (strain VF5).